A 26-amino-acid polypeptide reads, in one-letter code: MGTTTMGVKLDDATRERIKSAASRID.

The segment at 1–26 is disordered; sequence MGTTTMGVKLDDATRERIKSAASRID. Residues 9-26 are compositionally biased toward basic and acidic residues; the sequence is KLDDATRERIKSAASRID.

FAD serves as cofactor.

It catalyses the reaction L-proline + a quinone = (S)-1-pyrroline-5-carboxylate + a quinol + H(+). The enzyme catalyses L-glutamate 5-semialdehyde + NAD(+) + H2O = L-glutamate + NADH + 2 H(+). Its pathway is amino-acid degradation; L-proline degradation into L-glutamate; L-glutamate from L-proline: step 1/2. It participates in amino-acid degradation; L-proline degradation into L-glutamate; L-glutamate from L-proline: step 2/2. Its function is as follows. Oxidizes proline to glutamate for use as a carbon and nitrogen source and also function as a transcriptional repressor of the put operon. This Klebsiella pneumoniae protein is Bifunctional protein PutA (putA).